Reading from the N-terminus, the 338-residue chain is Aspartate carbamoyltransferase catalytic subunit (338 aa).

Carbamoyl phosphate contacts are provided by Arg72 and Thr73. Position 100 (Lys100) interacts with L-aspartate. Residues Arg122, His152, and Gln155 each contribute to the carbamoyl phosphate site. L-aspartate-binding residues include Arg186 and Arg243. Carbamoyl phosphate-binding residues include Gly284 and Pro285.

The protein belongs to the aspartate/ornithine carbamoyltransferase superfamily. ATCase family. Heterododecamer (2C3:3R2) of six catalytic PyrB chains organized as two trimers (C3), and six regulatory PyrI chains organized as three dimers (R2).

It carries out the reaction carbamoyl phosphate + L-aspartate = N-carbamoyl-L-aspartate + phosphate + H(+). Its pathway is pyrimidine metabolism; UMP biosynthesis via de novo pathway; (S)-dihydroorotate from bicarbonate: step 2/3. Catalyzes the condensation of carbamoyl phosphate and aspartate to form carbamoyl aspartate and inorganic phosphate, the committed step in the de novo pyrimidine nucleotide biosynthesis pathway. The protein is Aspartate carbamoyltransferase catalytic subunit of Acinetobacter baylyi (strain ATCC 33305 / BD413 / ADP1).